The primary structure comprises 291 residues: Protease HtpX (291 aa).

The next 2 membrane-spanning stretches (helical) occupy residues 4-24 and 37-57; these read VLLF…VLSV and GGLL…SLLM. Zn(2+) is bound at residue histidine 143. Residue glutamate 144 is part of the active site. Histidine 147 lines the Zn(2+) pocket. 2 helical membrane-spanning segments follow: residues 158–178 and 198–218; these read LIQG…AGIV and FAIS…IVMW. Glutamate 224 lines the Zn(2+) pocket.

The protein belongs to the peptidase M48B family. The cofactor is Zn(2+).

It localises to the cell inner membrane. This is Protease HtpX from Tolumonas auensis (strain DSM 9187 / NBRC 110442 / TA 4).